We begin with the raw amino-acid sequence, 216 residues long: Probable nicotinate-nucleotide adenylyltransferase (216 aa).

It belongs to the NadD family.

The enzyme catalyses nicotinate beta-D-ribonucleotide + ATP + H(+) = deamido-NAD(+) + diphosphate. Its pathway is cofactor biosynthesis; NAD(+) biosynthesis; deamido-NAD(+) from nicotinate D-ribonucleotide: step 1/1. In terms of biological role, catalyzes the reversible adenylation of nicotinate mononucleotide (NaMN) to nicotinic acid adenine dinucleotide (NaAD). The sequence is that of Probable nicotinate-nucleotide adenylyltransferase from Desulfatibacillum aliphaticivorans.